Consider the following 62-residue polypeptide: Large ribosomal subunit protein eL24 (62 aa).

Residues C7, C10, C33, and C37 each coordinate Zn(2+). The C4-type zinc-finger motif lies at 7-37 (CDYCGDDIEPGTGTMFVHNDGSTVHFCSAKC).

This sequence belongs to the eukaryotic ribosomal protein eL24 family. In terms of assembly, part of the 50S ribosomal subunit. Forms a cluster with proteins L3 and L14. The cofactor is Zn(2+).

Binds to the 23S rRNA. This chain is Large ribosomal subunit protein eL24, found in Halobacterium salinarum (strain ATCC 29341 / DSM 671 / R1).